Reading from the N-terminus, the 132-residue chain is uncharacterized protein (132 aa).

A run of 3 helical transmembrane segments spans residues Met18–Ile38, Ile50–Ile70, and Val71–Ile91.

The protein resides in the cell membrane. This is an uncharacterized protein from Bacillus subtilis (strain 168).